The primary structure comprises 433 residues: D-amino acid dehydrogenase (433 aa).

3–17 (VLVLGSGVIGTTSAY) provides a ligand contact to FAD.

Belongs to the DadA oxidoreductase family. FAD serves as cofactor.

The enzyme catalyses a D-alpha-amino acid + A + H2O = a 2-oxocarboxylate + AH2 + NH4(+). It functions in the pathway amino-acid degradation; D-alanine degradation; NH(3) and pyruvate from D-alanine: step 1/1. In terms of biological role, oxidative deamination of D-amino acids. This is D-amino acid dehydrogenase from Pseudomonas syringae pv. syringae (strain B728a).